A 357-amino-acid polypeptide reads, in one-letter code: RNA-binding protein 43 (357 aa).

Positions 15–104 (RTVVVAGLPV…VSLRVSHFGD (90 aa)) constitute an RRM domain.

The protein is RNA-binding protein 43 (RBM43) of Homo sapiens (Human).